The sequence spans 506 residues: UDP-N-acetylmuramoyl-L-alanyl-D-glutamate--2,6-diaminopimelate ligase (506 aa).

Serine 42 serves as a coordination point for UDP-N-acetyl-alpha-D-muramoyl-L-alanyl-D-glutamate. 125 to 131 (GTSGKTT) contributes to the ATP binding site. UDP-N-acetyl-alpha-D-muramoyl-L-alanyl-D-glutamate-binding positions include 166–167 (TT), serine 193, and arginine 201. The residue at position 233 (lysine 233) is an N6-carboxylysine. Residues arginine 395, 419-422 (DNPR), glycine 475, and glutamate 479 contribute to the meso-2,6-diaminopimelate site. The short motif at 419–422 (DNPR) is the Meso-diaminopimelate recognition motif element.

The protein belongs to the MurCDEF family. MurE subfamily. Mg(2+) serves as cofactor. Carboxylation is probably crucial for Mg(2+) binding and, consequently, for the gamma-phosphate positioning of ATP.

It localises to the cytoplasm. The catalysed reaction is UDP-N-acetyl-alpha-D-muramoyl-L-alanyl-D-glutamate + meso-2,6-diaminopimelate + ATP = UDP-N-acetyl-alpha-D-muramoyl-L-alanyl-gamma-D-glutamyl-meso-2,6-diaminopimelate + ADP + phosphate + H(+). The protein operates within cell wall biogenesis; peptidoglycan biosynthesis. Its function is as follows. Catalyzes the addition of meso-diaminopimelic acid to the nucleotide precursor UDP-N-acetylmuramoyl-L-alanyl-D-glutamate (UMAG) in the biosynthesis of bacterial cell-wall peptidoglycan. The polypeptide is UDP-N-acetylmuramoyl-L-alanyl-D-glutamate--2,6-diaminopimelate ligase (Streptomyces coelicolor (strain ATCC BAA-471 / A3(2) / M145)).